A 275-amino-acid chain; its full sequence is Proteasome subunit beta (275 aa).

The propeptide at 1 to 52 is removed in mature form; by autocatalysis; sequence MQDTTANQVAANATSSFTEHLQRNRPGLLPYNQPFPAALTGAGSQPLQVPHA. The active-site Nucleophile is the T53.

This sequence belongs to the peptidase T1B family. The 20S proteasome core is composed of 14 alpha and 14 beta subunits that assemble into four stacked heptameric rings, resulting in a barrel-shaped structure. The two inner rings, each composed of seven catalytic beta subunits, are sandwiched by two outer rings, each composed of seven alpha subunits. The catalytic chamber with the active sites is on the inside of the barrel. Has a gated structure, the ends of the cylinder being occluded by the N-termini of the alpha-subunits. Is capped by the proteasome-associated ATPase, ARC.

The protein resides in the cytoplasm. It carries out the reaction Cleavage of peptide bonds with very broad specificity.. Its pathway is protein degradation; proteasomal Pup-dependent pathway. Its activity is regulated as follows. The formation of the proteasomal ATPase ARC-20S proteasome complex, likely via the docking of the C-termini of ARC into the intersubunit pockets in the alpha-rings, may trigger opening of the gate for substrate entry. Interconversion between the open-gate and close-gate conformations leads to a dynamic regulation of the 20S proteasome proteolysis activity. In terms of biological role, component of the proteasome core, a large protease complex with broad specificity involved in protein degradation. The polypeptide is Proteasome subunit beta (Arthrobacter sp. (strain FB24)).